The chain runs to 59 residues: uncharacterized protein (59 aa).

Its subcellular location is the mitochondrion. This is an uncharacterized protein from Ascobolus immersus.